A 197-amino-acid chain; its full sequence is Ribonuclease HII (197 aa).

In terms of domain architecture, RNase H type-2 spans 11-197 (GRIAGVDEVG…FGPVKRVLGL (187 aa)). Residues aspartate 17, glutamate 18, and aspartate 109 each contribute to the a divalent metal cation site.

This sequence belongs to the RNase HII family. It depends on Mn(2+) as a cofactor. Mg(2+) serves as cofactor.

The protein localises to the cytoplasm. It carries out the reaction Endonucleolytic cleavage to 5'-phosphomonoester.. Its function is as follows. Endonuclease that specifically degrades the RNA of RNA-DNA hybrids. This Edwardsiella ictaluri (strain 93-146) protein is Ribonuclease HII.